The primary structure comprises 357 residues: AA9 family lytic polysaccharide monooxygenase B (357 aa).

The signal sequence occupies residues 1-18 (MKFSSVLALAASAKLVAS). Residues histidine 19 and histidine 101 each contribute to the Cu(2+) site. The tract at residues 19-234 (HATVFAVWIN…IPGPAVWDGA (216 aa)) is catalytic. A disulfide bond links cysteine 61 and cysteine 182. O2 contacts are provided by histidine 168 and glutamine 177. Tyrosine 179 contacts Cu(2+). A ser/Thr-rich linker region spans residues 235–318 (SSGSGSSGSG…SAAPTGGTGT (84 aa)). The tract at residues 292 to 317 (SVRPTTSAAPTTSAPTSSAAPTGGTG) is disordered. Over residues 295-313 (PTTSAAPTTSAPTSSAAPT) the composition is skewed to low complexity. Residues 319–355 (GSIQIYQQCGGMNYKGATGCASGLTCKQWNPYYHQCV) enclose the CBM1 domain.

It belongs to the polysaccharide monooxygenase AA9 family. The cofactor is Cu(2+).

The protein localises to the secreted. The enzyme catalyses [(1-&gt;4)-beta-D-glucosyl]n+m + reduced acceptor + O2 = 4-dehydro-beta-D-glucosyl-[(1-&gt;4)-beta-D-glucosyl]n-1 + [(1-&gt;4)-beta-D-glucosyl]m + acceptor + H2O.. Functionally, lytic polysaccharide monooxygenase (LPMO) that depolymerizes crystalline and amorphous polysaccharides via the oxidation of scissile alpha- or beta-(1-4)-glycosidic bonds, yielding C4 oxidation products. Catalysis by LPMOs requires the reduction of the active-site copper from Cu(II) to Cu(I) by a reducing agent and H(2)O(2) or O(2) as a cosubstrate. Active on carboxymethylcellulose (CMC), hydroxyethylcellulose (HEC) and beta-glucan. Also active on soluble cellohexaose, a property that is restricted to only a few characterized LPMOs. This is AA9 family lytic polysaccharide monooxygenase B from Emericella nidulans (strain FGSC A4 / ATCC 38163 / CBS 112.46 / NRRL 194 / M139) (Aspergillus nidulans).